We begin with the raw amino-acid sequence, 354 residues long: Rhodopsin (354 aa).

The Extracellular portion of the chain corresponds to 1–36; sequence MNGTEGPYFYIPMLNTTGVVRSPYEYPQYYLVNPAA. N-linked (GlcNAc...) asparagine glycosylation is found at Asn2 and Asn15. Residues 37-61 form a helical membrane-spanning segment; the sequence is YAVLGAYMFFLILVGFPINFLTLYV. Topologically, residues 62–73 are cytoplasmic; the sequence is TIEHKKLRTPLN. The chain crosses the membrane as a helical span at residues 74–96; the sequence is YILLNLAVADLFMVFGGFTTTIY. The Extracellular segment spans residues 97 to 110; sequence TSMHGYFVLGRLGC. Cys110 and Cys187 are disulfide-bonded. Residues 111–133 form a helical membrane-spanning segment; the sequence is NVEGFSATLGGEIALWSLVVLAI. Positions 134–136 match the 'Ionic lock' involved in activated form stabilization motif; sequence ERW. At 134–152 the chain is on the cytoplasmic side; sequence ERWVVVCKPISNFRFGENH. The helical transmembrane segment at 153 to 173 threads the bilayer; it reads AIMGVAFTWFMAAACAVPPLF. At 174 to 202 the chain is on the extracellular side; that stretch reads GWSRYIPEGMQCSCGIDYYTRAEGFNNES. A glycan (N-linked (GlcNAc...) asparagine) is linked at Asn200. A helical membrane pass occupies residues 203–224; it reads FVIYMFTCHFCIPLMVVFFCYG. The Cytoplasmic portion of the chain corresponds to 225–252; the sequence is RLVCAVKEAAAAQQESETTQRAEREVTR. Residues 253–274 traverse the membrane as a helical segment; it reads MVIIMVVSFLVSWVPYASVAWY. At 275-286 the chain is on the extracellular side; the sequence is IFTHQGSEFGPL. The helical transmembrane segment at 287–308 threads the bilayer; sequence FMTIPAFFAKSSSIYNPMIYIC. Residue Lys296 is modified to N6-(retinylidene)lysine. Residues 309 to 354 lie on the Cytoplasmic side of the membrane; it reads MNKQFRHCMITTLCCGKNPFEEEEGASSTASKTEASSVSSSSVSPA. S-palmitoyl cysteine attachment occurs at residues Cys322 and Cys323. A disordered region spans residues 329 to 354; that stretch reads EEEEGASSTASKTEASSVSSSSVSPA. Residues 334–354 are compositionally biased toward low complexity; it reads ASSTASKTEASSVSSSSVSPA.

The protein belongs to the G-protein coupled receptor 1 family. Opsin subfamily. In terms of processing, phosphorylated on some or all of the serine and threonine residues present in the C-terminal region. Contains one covalently linked retinal chromophore.

It localises to the membrane. Its subcellular location is the cell projection. The protein localises to the cilium. It is found in the photoreceptor outer segment. Photoreceptor required for image-forming vision at low light intensity. While most salt water fish species use retinal as chromophore, most freshwater fish use 3-dehydroretinal, or a mixture of retinal and 3-dehydroretinal. Light-induced isomerization of 11-cis to all-trans retinal triggers a conformational change that activates signaling via G-proteins. Subsequent receptor phosphorylation mediates displacement of the bound G-protein alpha subunit by arrestin and terminates signaling. The protein is Rhodopsin (rho) of Atherina boyeri (Big-scale sand smelt).